The chain runs to 968 residues: A disintegrin and metalloproteinase with thrombospondin motifs 1 (968 aa).

2 disordered regions span residues 1 to 23 and 177 to 253; these read MQPKVPLGSRKQKPCSDMGDVQR and APAV…RKKR. A signal peptide spans 1 to 48; the sequence is MQPKVPLGSRKQKPCSDMGDVQRAARSRGSLSAHMLLLLLASITMLLC. The propeptide occupies 49–253; sequence ARGAHGRPTE…SGPGSIRKKR (205 aa). Residues 204 to 211 carry the Cysteine switch motif; that stretch reads AKCGVMDD. C206 contacts Zn(2+). Over residues 214-229 the composition is skewed to polar residues; that stretch reads LPTSDSRPESQNTRNQ. In terms of domain architecture, Peptidase M12B spans 259 to 468; that stretch reads RYVETMLVAD…GHGECLMDKP (210 aa). Residues E262, D345, and D352 each contribute to the Ca(2+) site. 4 disulfides stabilise this stretch: C334–C386, C363–C368, C380–C463, and C418–C447. H402 is a Zn(2+) binding site. E403 is an active-site residue. Residues H406 and H412 each contribute to the Zn(2+) site. Positions 463 and 466 each coordinate Ca(2+). Residues 477-559 form the Disintegrin domain; it reads DLPGTLYDAN…TDMKHFATPV (83 aa). Cystine bridges form between C489-C512, C500-C522, C507-C541, and C535-C546. An N-linked (GlcNAc...) asparagine glycan is attached at N548. One can recognise a TSP type-1 1 domain in the interval 560–615; sequence HGSWGPWGPWGDCSRTCGGGVQYTMRECDNPVPKNGGKYCEGKRVRYRSCNIEDCP. Disulfide bonds link C572/C609, C576/C614, and C587/C599. 3 N-linked (GlcNAc...) asparagine glycosylation sites follow: N721, N765, and N783. Residues 726–850 form a spacer region; sequence KKMSGIVTST…YFMKKKTESF (125 aa). TSP type-1 domains follow at residues 855 to 911 and 912 to 968; these read TFSE…LPCP and HWQV…TQCS. N946 carries an N-linked (GlcNAc...) asparagine glycan.

Requires Zn(2+) as cofactor. The precursor is cleaved by a furin endopeptidase. Post-translationally, glycosylated. Can be O-fucosylated by POFUT2 on a serine or a threonine residue found within the consensus sequence C1-X(2)-(S/T)-C2-G of the TSP type-1 repeat domains where C1 and C2 are the first and second cysteine residue of the repeat, respectively. Fucosylated repeats can then be further glycosylated by the addition of a beta-1,3-glucose residue by the glucosyltransferase, B3GALTL. Fucosylation mediates the efficient secretion of ADAMTS family members. Can also be C-glycosylated with one or two mannose molecules on tryptophan residues within the consensus sequence W-X-X-W of the TPRs, and N-glycosylated. These other glycosylations can also facilitate secretion.

Its subcellular location is the secreted. The protein resides in the extracellular space. It is found in the extracellular matrix. Functionally, metalloprotease which cleaves aggrecan, a cartilage proteoglycan, at the '1691-Glu-|-Leu-1692' site (within the chondroitin sulfate attachment domain), and may be involved in its turnover. Also cleaves COMP. Has angiogenic inhibitor activity. May play a critical role in follicular rupture. The polypeptide is A disintegrin and metalloproteinase with thrombospondin motifs 1 (Adamts1) (Mus musculus (Mouse)).